The chain runs to 308 residues: MAWAMDNAILETILQRVRPLIGQGKVADYIPALASVEGSKLGIAICTVDGQHYQAGDAHERFSIQSISKVLSLVVAMRHYPEEEIWQRVGKDPSGSPFNSLVQLEMEQGIPRNPFINAGALVVCDMLQGRLSAPRQRMLEVVRALCGVSDITYDATVARSEFEHSARNAAIAWLMKSFGNFHHDVPTVLQNYFHYCALKMSCMELARTFVFLANQGEAFHLDEPVVTPMQARQINALMATSGMYQNAGEFAWRVGLPAKSGVGGGIVAIVPHEMAIAVWSPELDPAGNSLAGIAALEQLTQTLGRSVY.

Serine 66, asparagine 117, glutamate 161, asparagine 168, tyrosine 192, tyrosine 244, and valine 262 together coordinate substrate.

This sequence belongs to the glutaminase family. As to quaternary structure, homotetramer.

It catalyses the reaction L-glutamine + H2O = L-glutamate + NH4(+). The protein is Glutaminase of Salmonella choleraesuis (strain SC-B67).